A 2287-amino-acid chain; its full sequence is Protein Ycf2 (2287 aa).

1641 to 1648 (GSIGTGRS) provides a ligand contact to ATP.

Belongs to the Ycf2 family.

The protein resides in the plastid. Its subcellular location is the chloroplast stroma. Functionally, probable ATPase of unknown function. Its presence in a non-photosynthetic plant (Epifagus virginiana) and experiments in tobacco indicate that it has an essential function which is probably not related to photosynthesis. This Lepidium virginicum (Virginia pepperweed) protein is Protein Ycf2.